We begin with the raw amino-acid sequence, 272 residues long: Putative pyruvate, phosphate dikinase regulatory protein (272 aa).

151 to 158 (GISRTSKT) serves as a coordination point for ADP.

It belongs to the pyruvate, phosphate/water dikinase regulatory protein family. PDRP subfamily.

The catalysed reaction is N(tele)-phospho-L-histidyl/L-threonyl-[pyruvate, phosphate dikinase] + ADP = N(tele)-phospho-L-histidyl/O-phospho-L-threonyl-[pyruvate, phosphate dikinase] + AMP + H(+). It catalyses the reaction N(tele)-phospho-L-histidyl/O-phospho-L-threonyl-[pyruvate, phosphate dikinase] + phosphate + H(+) = N(tele)-phospho-L-histidyl/L-threonyl-[pyruvate, phosphate dikinase] + diphosphate. Functionally, bifunctional serine/threonine kinase and phosphorylase involved in the regulation of the pyruvate, phosphate dikinase (PPDK) by catalyzing its phosphorylation/dephosphorylation. The chain is Putative pyruvate, phosphate dikinase regulatory protein from Staphylococcus aureus (strain USA300).